A 273-amino-acid chain; its full sequence is MASTVDIASSFIEGAPPGELADVVADVKTLTSNGADIIPSLAPAFERYNETQLATVKLPGASQEVLISEYNKLDGNRYFDVESQTSFEVDHVTQEASAAQSYVLDSQNADLIKSLLKSLGAHAREHYPNCAYGVYPIENDSAVAILLVSNRYSPNNFWNGRFRATYQFPVSEPTTVTGKIQVDVHYYEDGNVALNTNKPLNLSVSSLSAESIISRIATAERDYQEDLNRAFVQMAEGAFKGLRRQLPITRQKVEWEKVGGYRLGQDISGGKGR.

It belongs to the F-actin-capping protein alpha subunit family. As to quaternary structure, component of the F-actin capping complex, composed of a heterodimer of an alpha and a beta subunit.

Its subcellular location is the cytoplasm. The protein resides in the cytoskeleton. It is found in the actin patch. Functionally, F-actin-capping proteins bind in a Ca(2+)-independent manner to the fast growing ends of actin filaments (barbed end) thereby blocking the exchange of subunits at these ends. Unlike other capping proteins (such as gelsolin and severin), these proteins do not sever actin filaments. In Aspergillus oryzae (strain ATCC 42149 / RIB 40) (Yellow koji mold), this protein is F-actin-capping protein subunit alpha (cap1).